The sequence spans 124 residues: uncharacterized protein (124 aa).

The chain crosses the membrane as a helical span at residues 83-100 (VTCFSLYTICYRIVLIWA).

Its subcellular location is the membrane. This is an uncharacterized protein from Saccharomyces cerevisiae (strain ATCC 204508 / S288c) (Baker's yeast).